The following is a 137-amino-acid chain: Small ribosomal subunit protein uS11 (137 aa).

The disordered stretch occupies residues 116–137 (EDVTPVPSDSTRKKGGRRGRRL). Over residues 128-137 (KKGGRRGRRL) the composition is skewed to basic residues.

This sequence belongs to the universal ribosomal protein uS11 family.

The protein is Small ribosomal subunit protein uS11 (RPS14) of Kluyveromyces lactis (strain ATCC 8585 / CBS 2359 / DSM 70799 / NBRC 1267 / NRRL Y-1140 / WM37) (Yeast).